The sequence spans 300 residues: Acetylglutamate kinase (300 aa).

Substrate-binding positions include 73 to 74, Arg-95, and Asn-197; that span reads GG.

It belongs to the acetylglutamate kinase family. ArgB subfamily.

The protein localises to the cytoplasm. The enzyme catalyses N-acetyl-L-glutamate + ATP = N-acetyl-L-glutamyl 5-phosphate + ADP. The protein operates within amino-acid biosynthesis; L-arginine biosynthesis; N(2)-acetyl-L-ornithine from L-glutamate: step 2/4. In terms of biological role, catalyzes the ATP-dependent phosphorylation of N-acetyl-L-glutamate. This chain is Acetylglutamate kinase, found in Polynucleobacter necessarius subsp. necessarius (strain STIR1).